The sequence spans 388 residues: Mannitol-1-phosphate 5-dehydrogenase (388 aa).

5–16 (AVHFGGGNIGRG) contributes to the NAD(+) binding site. Residue Lys-213 is part of the active site.

It belongs to the mannitol dehydrogenase family. In terms of assembly, monomer.

The enzyme catalyses D-mannitol 1-phosphate + NAD(+) = beta-D-fructose 6-phosphate + NADH + H(+). Its function is as follows. Catalyzes the NAD(H)-dependent interconversion of D-fructose 6-phosphate and D-mannitol 1-phosphate in the mannitol metabolic pathway. In Ajellomyces capsulatus (strain NAm1 / WU24) (Darling's disease fungus), this protein is Mannitol-1-phosphate 5-dehydrogenase.